The primary structure comprises 220 residues: Histone deacetylase complex subunit SAP30 (220 aa).

The tract at residues methionine 1–lysine 129 is interaction with NCOR1. Threonine 5 bears the Phosphothreonine mark. The Atypical zinc finger occupies cysteine 67 to histidine 115. Lysine 87 participates in a covalent cross-link: Glycyl lysine isopeptide (Lys-Gly) (interchain with G-Cter in SUMO2). Positions arginine 123 to isoleucine 143 are disordered. The tract at residues glycine 130–histidine 220 is interaction with SIN3A. 2 positions are modified to phosphoserine: serine 131 and serine 138. Residue threonine 145 is modified to Phosphothreonine. Residues lysine 194, lysine 205, and lysine 214 each participate in a glycyl lysine isopeptide (Lys-Gly) (interchain with G-Cter in SUMO2) cross-link.

It belongs to the SAP30 family. As to quaternary structure, component of the histone deacetylase complex that includes at least SIN3A, HDAC1 and HDAC2. Found in a complex composed of at least SINHCAF, SIN3A, HDAC1, SAP30, RBBP4, OGT and TET1. Interacts with HDAC1. Interacts with SIN3A, SIN3B, HDAC2, RBBP4 and NCOR1. Interacts with SAMSN1. Interacts with HCFC1. Interacts with SAP30BP. In terms of tissue distribution, expressed in all tissues tested with highest levels in pancreas, ovary, PBL, spleen and thymus; lowest levels in brain, placenta, lung and kidney.

The protein localises to the nucleus. Functionally, involved in the functional recruitment of the Sin3-histone deacetylase complex (HDAC) to a specific subset of N-CoR corepressor complexes. Capable of transcription repression by N-CoR. Active in deacetylating core histone octamers (when in a complex) but inactive in deacetylating nucleosomal histones. In terms of biological role, (Microbial infection) Involved in transcriptional repression of HHV-1 genes TK and gC. In Homo sapiens (Human), this protein is Histone deacetylase complex subunit SAP30.